Consider the following 307-residue polypeptide: Probable protein S-acyltransferase 14 (307 aa).

The next 2 helical transmembrane spans lie at 22–42 (LGSI…YAVV) and 63–83 (ILIL…SVVF). Residues 127 to 177 (RFCRKCNQLKPSRCHHCSVCGRCVLKMDHHCVWVVNCVGALNYKYFLLFLF) enclose the DHHC domain. Cys157 functions as the S-palmitoyl cysteine intermediate in the catalytic mechanism. 2 helical membrane-spanning segments follow: residues 171-191 (YFLL…LVLM) and 213-233 (TFLA…FLIM).

This sequence belongs to the DHHC palmitoyltransferase family.

Its subcellular location is the golgi apparatus. It is found in the trans-Golgi network membrane. It carries out the reaction L-cysteinyl-[protein] + hexadecanoyl-CoA = S-hexadecanoyl-L-cysteinyl-[protein] + CoA. In terms of biological role, palmitoyl acyltransferase. This Arabidopsis thaliana (Mouse-ear cress) protein is Probable protein S-acyltransferase 14 (PAT14).